The chain runs to 288 residues: Proteasome assembly chaperone 1 (288 aa).

N-acetylalanine is present on A2. The interval 13–35 (PCRAGTEDEEEEEEGRRETPEDR) is disordered. T18 carries the post-translational modification Phosphothreonine. The span at 26–35 (EGRRETPEDR) shows a compositional bias: basic and acidic residues. A Phosphothreonine modification is found at T54. Residue S180 is modified to Phosphoserine. K264 is modified (N6-acetyllysine).

The protein belongs to the PSMG1 family. Forms a heterodimer with PSMG2. The PSMG1-PSMG2 heterodimer interacts directly with the PSMA5 and PSMA7 proteasome alpha subunits. In terms of processing, degraded by the proteasome upon completion of 20S proteasome maturation. In the adult, detected in brain, colon, leukocytes, breast and testis. Widely expressed in the fetus. Also expressed in a variety of proliferating cell lines.

Its subcellular location is the cytoplasm. The protein localises to the endoplasmic reticulum. Its function is as follows. Chaperone protein which promotes assembly of the 20S proteasome as part of a heterodimer with PSMG2. The PSMG1-PSMG2 heterodimer binds to the PSMA5 and PSMA7 proteasome subunits, promotes assembly of the proteasome alpha subunits into the heteroheptameric alpha ring and prevents alpha ring dimerization. The sequence is that of Proteasome assembly chaperone 1 from Homo sapiens (Human).